We begin with the raw amino-acid sequence, 31 residues long: U8-ctenitoxin-Co1a (31 aa).

2 disulfide bridges follow: Cys-4–Cys-18 and Cys-11–Cys-24.

In terms of tissue distribution, expressed by the venom gland.

The protein localises to the secreted. Functionally, blocks voltage-gated sodium channels (Nav). The polypeptide is U8-ctenitoxin-Co1a (Ctenus ornatus (Brazilian spider)).